The primary structure comprises 167 residues: Early nodulin-like protein 16 (167 aa).

An N-terminal signal peptide occupies residues 1–24 (MARVAVLVAGAVLAFLLAATNVTA). In terms of domain architecture, Phytocyanin spans 25–126 (KRWTVGDNKF…GMKLAVLVEK (102 aa)). 4 N-linked (GlcNAc...) asparagine glycosylation sites follow: N40, N71, N86, and N99. A disulfide bridge connects residues C78 and C114. N138 carries GPI-anchor amidated asparagine lipidation. A propeptide spans 139-167 (SARRTFSVSGFAYQFLIPVAVFAAVGTRY) (removed in mature form).

This sequence belongs to the early nodulin-like (ENODL) family.

It is found in the cell membrane. Functionally, may act as a carbohydrate transporter. In Arabidopsis thaliana (Mouse-ear cress), this protein is Early nodulin-like protein 16.